Here is a 281-residue protein sequence, read N- to C-terminus: Gas vesicle protein L1 (281 aa).

The protein belongs to the gas vesicle GvpF/GvpL family. As to quaternary structure, may form oligomers. GvpF to GvpM interact with each other in vitro, and may form multi-subunit complex(es). Interacts with GvpC1, GvpN1 and GvpO1.

Its subcellular location is the gas vesicle. The protein localises to the cytoplasm. Proteins GvpF to GvpM might be involved in nucleating gas vesicle formation. A minor component of the gas vesicle. This the only minor gas vesicle protein that binds all the others (including GvpC1, GvpN1 and GvpO1, but not GvpA1), suggesting it might be able to assemble them. Gas vesicles are hollow, gas filled proteinaceous nanostructures found in several microbial planktonic microorganisms. They allow positioning of halobacteria at the optimal depth for growth in the poorly aerated, shallow brine pools of their habitat. Functionally, expression of a 9.5 kb p-vac DNA fragment containing 2 divergently transcribed regions (gvpD-gvpE-gvpF-gvpG-gvpH-gvpI-gvpJ-gvpK-gvpL-gvpM and gvpA-gvpC-gvpN-gvpO) allows H.volcanii to produce gas vesicles. A minimal gas vesicle can be made in H.volcanii by gvpA1-gvpO1 plus gvpF1-gvpG1-gvpJ1-gvpK1-gvpL1-gvpM1; lack of enough GvpJ1 prevents their formation. A similar region restores gas vesicle production in H.halobium without the p-vac locus, but it still has the c-vac locus. The polypeptide is Gas vesicle protein L1 (gvpL11) (Halobacterium salinarum (strain ATCC 700922 / JCM 11081 / NRC-1) (Halobacterium halobium)).